The primary structure comprises 651 residues: Bromodomain-containing protein 7 (651 aa).

K21 participates in a covalent cross-link: Glycyl lysine isopeptide (Lys-Gly) (interchain with G-Cter in SUMO2). Residues 34 to 103 (VTELSTGSSG…RDRAENEVDR (70 aa)) are disordered. Over residues 35–45 (TELSTGSSGHD) the composition is skewed to polar residues. Basic and acidic residues predominate over residues 47–57 (SLFEDRSDHDK). Over residues 58-69 (HKDRKRKKRKKG) the composition is skewed to basic residues. The Nuclear localization signal motif lies at 65 to 96 (KRKKGEKQAPGEEKGRKRRRVKEDKKKRDRDR). The span at 70 to 103 (EKQAPGEEKGRKRRRVKEDKKKRDRDRAENEVDR) shows a compositional bias: basic and acidic residues. Glycyl lysine isopeptide (Lys-Gly) (interchain with G-Cter in SUMO2) cross-links involve residues K127, K186, K197, K201, K212, and K241. In terms of domain architecture, Bromo spans 131–235 (VEQTPLQEAL…HSGMKILSQE (105 aa)). The interval 252-316 (KTRKQKERTD…RSSNSEREHE (65 aa)) is disordered. S279 and S289 each carry phosphoserine. The segment covering 290-316 (PAKDNKRKDKDVLEDKWRSSNSEREHE) has biased composition (basic and acidic residues). K305 participates in a covalent cross-link: Glycyl lysine isopeptide (Lys-Gly) (interchain with G-Cter in SUMO2). An N6-acetyllysine modification is found at K328. Residue K344 forms a Glycyl lysine isopeptide (Lys-Gly) (interchain with G-Cter in SUMO2) linkage. A Phosphoserine modification is found at S380. Residue K389 forms a Glycyl lysine isopeptide (Lys-Gly) (interchain with G-Cter in SUMO2) linkage. Phosphoserine is present on residues S475, S482, and S483. The stretch at 536-567 (SEEAEVFQRKLDETTRLLRELQEAQNERLSTR) forms a coiled coil. S621 is modified (phosphoserine).

In terms of assembly, interacts with IRF2 and HNRPUL1. Interacts (via N-terminus) with TP53. Interacts (via C-terminus) with EP300. Interacts with BRCA1. Interacts (via bromo domain) with histone H3 (via N-terminus) acetylated at 'Lys-14' (H3K14ac). Has low affinity for histone H3 acetylated at 'Lys-9' (H3K9ac). Has the highest affinity for histone H3 that is acetylated both at 'Lys-9' (H3K9ac) and at 'Lys-14' (H3K14ac). Has very low affinity for non-acetylated histone H3. Interacts (via bromo domain) with histone H4 (via N-terminus) acetylated at 'Lys-8' (H3K8ac) (in vitro). Interacts with TRIM24, PTPN13 and DVL1. Identified in a complex with SMARCA4/BRG1, SMARCC1/BAF155, SMARCE1/BAF57, DPF2/BAF45D and ARID2, subunits of the SWI/SNF-B (PBAF) chromatin remodeling complex. As to expression, ubiquitous.

Its subcellular location is the nucleus. The protein localises to the chromosome. In terms of biological role, acts both as coactivator and as corepressor. May play a role in chromatin remodeling. Transcriptional corepressor that down-regulates the expression of target genes. Binds to target promoters, leading to increased histone H3 acetylation at 'Lys-9' (H3K9ac). Binds to the ESR1 promoter. Recruits BRCA1 and POU2F1 to the ESR1 promoter. Coactivator for TP53-mediated activation of transcription of a set of target genes. Required for TP53-mediated cell-cycle arrest in response to oncogene activation. Promotes acetylation of TP53 at 'Lys-382', and thereby promotes efficient recruitment of TP53 to target promoters. Inhibits cell cycle progression from G1 to S phase. Activator of the Wnt signaling pathway in a DVL1-dependent manner by negatively regulating the GSK3B phosphotransferase activity. Induces dephosphorylation of GSK3B at 'Tyr-216'. Down-regulates TRIM24-mediated activation of transcriptional activation by AR. The polypeptide is Bromodomain-containing protein 7 (Brd7) (Mus musculus (Mouse)).